The chain runs to 208 residues: Small ribosomal subunit protein uS4 (208 aa).

In terms of domain architecture, S4 RNA-binding spans 98 to 160; sequence RRIDNTVYRL…SRQLQMINEA (63 aa).

Belongs to the universal ribosomal protein uS4 family. As to quaternary structure, part of the 30S ribosomal subunit. Contacts protein S5. The interaction surface between S4 and S5 is involved in control of translational fidelity.

Functionally, one of the primary rRNA binding proteins, it binds directly to 16S rRNA where it nucleates assembly of the body of the 30S subunit. Its function is as follows. With S5 and S12 plays an important role in translational accuracy. This Syntrophobacter fumaroxidans (strain DSM 10017 / MPOB) protein is Small ribosomal subunit protein uS4.